Here is a 291-residue protein sequence, read N- to C-terminus: rRNA 2'-O-methyltransferase fibrillarin (291 aa).

Basic and acidic residues-rich tracts occupy residues 1-12 (MKKTNKRPDGRK) and 20-29 (FRSDKGEGRG). The interval 1 to 45 (MKKTNKRPDGRKFQKGGKPFRSDKGEGRGRMNNKKKGSVNAGLDR) is disordered. Residues Arg-28 and Arg-62 each carry the asymmetric dimethylarginine modification. S-adenosyl-L-methionine is bound by residues 134–135 (TT), 153–154 (EF), 178–179 (DA), and 198–201 (DVSQ).

It belongs to the methyltransferase superfamily. Fibrillarin family. In terms of assembly, component of box C/D small nucleolar ribonucleoprotein (snoRNP) particles.

The protein resides in the nucleus. Its subcellular location is the nucleolus. The catalysed reaction is L-glutaminyl-[histone H2A] + S-adenosyl-L-methionine = N(5)-methyl-L-glutaminyl-[histone H2A] + S-adenosyl-L-homocysteine + H(+). Functionally, S-adenosyl-L-methionine-dependent methyltransferase that has the ability to methylate both RNAs and proteins. Involved in pre-rRNA processing. Utilizes the methyl donor S-adenosyl-L-methionine to catalyze the site-specific 2'-hydroxyl methylation of ribose moieties in pre-ribosomal RNA. Site specificity is provided by a guide RNA that base pairs with the substrate. Methylation occurs at a characteristic distance from the sequence involved in base pairing with the guide RNA. Also acts as a protein methyltransferase by mediating methylation of 'Gln-105' of histone H2A (H2AQ105me), a modification that impairs binding of the FACT complex and is specifically present at 35S ribosomal DNA locus. The chain is rRNA 2'-O-methyltransferase fibrillarin (NOP1) from Encephalitozoon cuniculi (strain GB-M1) (Microsporidian parasite).